We begin with the raw amino-acid sequence, 297 residues long: Counting factor 45-1 (297 aa).

Positions 1 to 20 (MNKLISLLLVCLVAIALVNA) are cleaved as a signal peptide. The Ch-type lysozyme domain occupies 24 to 235 (IDFDSDTVNS…SASTGSGSGS (212 aa)). Residues Asp-29, Asp-119, and Glu-121 contribute to the active site. A glycan (N-linked (GlcNAc...) asparagine) is linked at Asn-166. The interval 231 to 296 (SGSGSSSGSS…GSSSGSGSGS (66 aa)) is S-G-S motif repeats. The disordered stretch occupies residues 231-297 (SGSGSSSGSS…SSSGSGSGSS (67 aa)). The span at 234 to 275 (GSSSGSSSGSSSGSSSGSGSSSGSGSSSGSSSGSGSGSSSSG) shows a compositional bias: low complexity. Positions 276 to 297 (SGSGSGSSSGSGSSSGSGSGSS) are enriched in gly residues.

Belongs to the glycosyl hydrolase 25 family. As to quaternary structure, monomer. Component of the counting factor (CF) complex, which includes cf60, cf50, cf45-1 and ctnA.

The protein localises to the secreted. Cell-counting factor that limits the maximum size of the multicellular structure during aggregation. In Dictyostelium discoideum (Social amoeba), this protein is Counting factor 45-1 (cf45-1).